A 221-amino-acid polypeptide reads, in one-letter code: Adenylate kinase (221 aa).

10-15 provides a ligand contact to ATP; sequence GAGKGT. An NMP region spans residues 30–59; that stretch reads STGDMLRAAVKAGTPLGVEAKKVMDAGGLV. Residues T31, R36, 57–59, 85–88, and Q92 contribute to the AMP site; these read GLV and GFPR. The tract at residues 122–159 is LID; that stretch reads GRRVHVASGRTYHVKYNPPKTEGVDDETGEALIQRDDD. ATP-binding positions include R123 and 132–133; that span reads TY. The AMP site is built by R156 and R167. G207 provides a ligand contact to ATP.

Belongs to the adenylate kinase family. Monomer.

The protein localises to the cytoplasm. It carries out the reaction AMP + ATP = 2 ADP. Its pathway is purine metabolism; AMP biosynthesis via salvage pathway; AMP from ADP: step 1/1. In terms of biological role, catalyzes the reversible transfer of the terminal phosphate group between ATP and AMP. Plays an important role in cellular energy homeostasis and in adenine nucleotide metabolism. The chain is Adenylate kinase from Cupriavidus necator (strain ATCC 17699 / DSM 428 / KCTC 22496 / NCIMB 10442 / H16 / Stanier 337) (Ralstonia eutropha).